The chain runs to 445 residues: Chromosome partition protein MukF (445 aa).

Residues 213 to 241 (LSETSSTLRELQDTLQAASDELQTQILDI) are leucine-zipper.

It belongs to the MukF family. As to quaternary structure, interacts, and probably forms a ternary complex, with MukE and MukB via its C-terminal region. The complex formation is stimulated by calcium or magnesium. It is required for an interaction between MukE and MukB.

It is found in the cytoplasm. The protein localises to the nucleoid. Functionally, involved in chromosome condensation, segregation and cell cycle progression. May participate in facilitating chromosome segregation by condensation DNA from both sides of a centrally located replisome during cell division. Not required for mini-F plasmid partitioning. Probably acts via its interaction with MukB and MukE. Overexpression results in anucleate cells. It has a calcium binding activity. The protein is Chromosome partition protein MukF of Vibrio campbellii (strain ATCC BAA-1116).